The chain runs to 162 residues: CASP-like protein 1C1 (162 aa).

Topologically, residues 1–7 are cytoplasmic; that stretch reads MFSAKAR. Residues 8–28 traverse the membrane as a helical segment; the sequence is WIVAVVLRVAAAGAAAVAAVL. At 29 to 52 the chain is on the extracellular side; it reads MAMSHDEVIVYGMEVQAKFRYTPS. A helical transmembrane segment spans residues 53–73; the sequence is LVFFVAANAAVSACSLVVLLV. At 74-83 the chain is on the cytoplasmic side; the sequence is PSSTSKLAAR. The chain crosses the membrane as a helical span at residues 84 to 104; it reads LLLMADVVLGMVLAGAFAAAG. The Extracellular segment spans residues 105–135; it reads AMAELGKNGNSHAGWIAICVQVPLFCDRVRS. The helical transmembrane segment at 136–156 threads the bilayer; that stretch reads ALVAGSATIVLYYLMLMYSIY. The Cytoplasmic segment spans residues 157–162; that stretch reads TLPMFP.

Belongs to the Casparian strip membrane proteins (CASP) family. Homodimer and heterodimers.

The protein localises to the cell membrane. In Oryza sativa subsp. japonica (Rice), this protein is CASP-like protein 1C1.